The chain runs to 905 residues: NADH-quinone oxidoreductase subunit G (905 aa).

Residues 1-83 (MATIHVDGKT…NTWISIEDEE (83 aa)) form the 2Fe-2S ferredoxin-type domain. [2Fe-2S] cluster-binding residues include Cys-34, Cys-45, Cys-48, and Cys-67. Residues 83–122 (EAKQFRASVVEWLMTNHPHDCPVCEEGGHCHLQDMTVMTG) enclose the 4Fe-4S His(Cys)3-ligated-type domain. Residues His-99, Cys-103, Cys-106, Cys-112, Cys-151, Cys-154, Cys-157, Cys-201, Cys-228, Cys-231, Cys-235, and Cys-263 each contribute to the [4Fe-4S] cluster site. The 4Fe-4S Mo/W bis-MGD-type domain maps to 221–277 (MQFAPSICHGCSSGCNISPGERYGEIRRIENRYNGSVNHYFLCDRGRFGYGYVNRED).

The protein belongs to the complex I 75 kDa subunit family. Composed of 13 different subunits. Subunits NuoCD, E, F, and G constitute the peripheral sector of the complex. Requires [2Fe-2S] cluster as cofactor. The cofactor is [4Fe-4S] cluster.

The enzyme catalyses a quinone + NADH + 5 H(+)(in) = a quinol + NAD(+) + 4 H(+)(out). NDH-1 shuttles electrons from NADH, via FMN and iron-sulfur (Fe-S) centers, to quinones in the respiratory chain. The immediate electron acceptor for the enzyme in this species is believed to be ubiquinone. Couples the redox reaction to proton translocation (for every two electrons transferred, four hydrogen ions are translocated across the cytoplasmic membrane), and thus conserves the redox energy in a proton gradient. The polypeptide is NADH-quinone oxidoreductase subunit G (nuoG) (Pseudomonas aeruginosa (strain ATCC 15692 / DSM 22644 / CIP 104116 / JCM 14847 / LMG 12228 / 1C / PRS 101 / PAO1)).